Here is a 153-residue protein sequence, read N- to C-terminus: Ribosome maturation factor RimP (153 aa).

This sequence belongs to the RimP family.

It is found in the cytoplasm. Its function is as follows. Required for maturation of 30S ribosomal subunits. The chain is Ribosome maturation factor RimP from Marinobacter nauticus (strain ATCC 700491 / DSM 11845 / VT8) (Marinobacter aquaeolei).